The primary structure comprises 337 residues: Cytoskeleton protein RodZ (337 aa).

At 1-111 (MNTEATHDQN…LGKRRKKRDG (111 aa)) the chain is on the cytoplasmic side. The region spanning 19-71 (LRNAREQLGLSQQAVAERLCLKVSTVRDIEEDKAPADLASTFLRGYIRSYARL) is the HTH cro/C1-type domain. Residues 30 to 49 (QQAVAERLCLKVSTVRDIEE) constitute a DNA-binding region (H-T-H motif). A helical; Signal-anchor for type II membrane protein transmembrane segment spans residues 112-132 (WLMTFTWLVLFVVVGLTGAWW). Topologically, residues 133-337 (WQNHKAQQEE…TLNAEQSPAQ (205 aa)) are periplasmic. The disordered stretch occupies residues 155–220 (NAGGDSAQSV…QNAVVAPSQA (66 aa)). Polar residues predominate over residues 160 to 192 (SAQSVPLDTSEAASQDSTPAPTAPVDSTATNAV). A compositionally biased stretch (low complexity) spans 193-217 (PQTPDASATTTAPAADAQQNAVVAP).

Belongs to the RodZ family.

Its subcellular location is the cell inner membrane. In terms of biological role, cytoskeletal protein that is involved in cell-shape control through regulation of the length of the long axis. This Citrobacter koseri (strain ATCC BAA-895 / CDC 4225-83 / SGSC4696) protein is Cytoskeleton protein RodZ.